We begin with the raw amino-acid sequence, 284 residues long: MKLDGYTRLAAVVANPIKHSISPFIHNRAFEATATNGAYVAWEIEASDLAETVANIRRYQMFGINLSMPYKEQVIPYLDKLSDEARLIGAVNTVVNENGNLIGYNTDGKGFFKCLPSFTISGKKMTLLGAGGAAKSILAQAILDGVSQISVFVRSVSMEKTRPYLDKLQEQTGFKVDLCALENVSELQARIAESDLLVNATSVGMDGQSSPVPENIVLPETLLVADIIYQPFETPFLKWARSQGNPAVNGLGMLLYQAAEAFQLWTGKEMPTEEIWQSLTEKYQ.

Shikimate is bound by residues 20–22 (SIS) and Ser-67. The Proton acceptor role is filled by Lys-71. Residue Asp-83 participates in NADP(+) binding. Residues Asn-92 and Asp-107 each contribute to the shikimate site. NADP(+) contacts are provided by residues 129–133 (GAGGA) and Ile-227. Tyr-229 lines the shikimate pocket. Gly-250 lines the NADP(+) pocket.

Belongs to the shikimate dehydrogenase family. As to quaternary structure, homodimer.

The enzyme catalyses shikimate + NADP(+) = 3-dehydroshikimate + NADPH + H(+). Its pathway is metabolic intermediate biosynthesis; chorismate biosynthesis; chorismate from D-erythrose 4-phosphate and phosphoenolpyruvate: step 4/7. In terms of biological role, involved in the biosynthesis of the chorismate, which leads to the biosynthesis of aromatic amino acids. Catalyzes the reversible NADPH linked reduction of 3-dehydroshikimate (DHSA) to yield shikimate (SA). The chain is Shikimate dehydrogenase (NADP(+)) from Streptococcus pneumoniae (strain JJA).